Reading from the N-terminus, the 558-residue chain is Dihydroxy-acid dehydratase (558 aa).

A Mg(2+)-binding site is contributed by Asp-78. Cys-119 provides a ligand contact to [2Fe-2S] cluster. Mg(2+) contacts are provided by Asp-120 and Lys-121. Lys-121 is modified (N6-carboxylysine). Cys-192 contacts [2Fe-2S] cluster. Glu-445 is a Mg(2+) binding site. Ser-471 acts as the Proton acceptor in catalysis.

Belongs to the IlvD/Edd family. Homodimer. It depends on [2Fe-2S] cluster as a cofactor. Requires Mg(2+) as cofactor.

The catalysed reaction is (2R)-2,3-dihydroxy-3-methylbutanoate = 3-methyl-2-oxobutanoate + H2O. It catalyses the reaction (2R,3R)-2,3-dihydroxy-3-methylpentanoate = (S)-3-methyl-2-oxopentanoate + H2O. It functions in the pathway amino-acid biosynthesis; L-isoleucine biosynthesis; L-isoleucine from 2-oxobutanoate: step 3/4. Its pathway is amino-acid biosynthesis; L-valine biosynthesis; L-valine from pyruvate: step 3/4. Functions in the biosynthesis of branched-chain amino acids. Catalyzes the dehydration of (2R,3R)-2,3-dihydroxy-3-methylpentanoate (2,3-dihydroxy-3-methylvalerate) into 2-oxo-3-methylpentanoate (2-oxo-3-methylvalerate) and of (2R)-2,3-dihydroxy-3-methylbutanoate (2,3-dihydroxyisovalerate) into 2-oxo-3-methylbutanoate (2-oxoisovalerate), the penultimate precursor to L-isoleucine and L-valine, respectively. This chain is Dihydroxy-acid dehydratase, found in Akkermansia muciniphila (strain ATCC BAA-835 / DSM 22959 / JCM 33894 / BCRC 81048 / CCUG 64013 / CIP 107961 / Muc).